A 152-amino-acid polypeptide reads, in one-letter code: Putative NrdI-like protein (152 aa).

The protein belongs to the NrdI family.

In Streptococcus pyogenes serotype M18 (strain MGAS8232), this protein is Putative NrdI-like protein.